The primary structure comprises 79 residues: Acyl carrier protein (79 aa).

The region spanning Gln-3 to Lys-78 is the Carrier domain. Ser-38 carries the O-(pantetheine 4'-phosphoryl)serine modification.

It belongs to the acyl carrier protein (ACP) family. In terms of processing, 4'-phosphopantetheine is transferred from CoA to a specific serine of apo-ACP by AcpS. This modification is essential for activity because fatty acids are bound in thioester linkage to the sulfhydryl of the prosthetic group.

The protein localises to the cytoplasm. The protein operates within lipid metabolism; fatty acid biosynthesis. Its function is as follows. Carrier of the growing fatty acid chain in fatty acid biosynthesis. The chain is Acyl carrier protein from Prochlorococcus marinus (strain MIT 9312).